A 194-amino-acid chain; its full sequence is Large ribosomal subunit protein uL24c (194 aa).

Residues 1 to 50 constitute a chloroplast transit peptide; the sequence is MVAMAMASLQSSMSSLSLSSNSFLGQPLSPITLSPFLQGKPTEKKCLIVM.

It belongs to the universal ribosomal protein uL24 family. As to quaternary structure, part of the 50S ribosomal subunit.

The protein localises to the plastid. It localises to the chloroplast. In terms of biological role, one of two assembly initiator proteins, it binds directly to the 5'-end of the 23S rRNA, where it nucleates assembly of the 50S subunit. The sequence is that of Large ribosomal subunit protein uL24c (RPL24) from Pisum sativum (Garden pea).